The primary structure comprises 203 residues: uncharacterized protein (203 aa).

This is an uncharacterized protein from Chlorobium limicola.